A 337-amino-acid polypeptide reads, in one-letter code: 4-hydroxy-3-methylbut-2-enyl diphosphate reductase (337 aa).

Residue Cys-38 participates in [4Fe-4S] cluster binding. The (2E)-4-hydroxy-3-methylbut-2-enyl diphosphate site is built by His-67 and His-100. Positions 67 and 100 each coordinate dimethylallyl diphosphate. The isopentenyl diphosphate site is built by His-67 and His-100. Position 122 (Cys-122) interacts with [4Fe-4S] cluster. His-150 lines the (2E)-4-hydroxy-3-methylbut-2-enyl diphosphate pocket. A dimethylallyl diphosphate-binding site is contributed by His-150. His-150 contacts isopentenyl diphosphate. The active-site Proton donor is Glu-152. Thr-190 serves as a coordination point for (2E)-4-hydroxy-3-methylbut-2-enyl diphosphate. A [4Fe-4S] cluster-binding site is contributed by Cys-220. Residues Ser-248, Ser-249, Asn-250, and Ser-293 each coordinate (2E)-4-hydroxy-3-methylbut-2-enyl diphosphate. 4 residues coordinate dimethylallyl diphosphate: Ser-248, Ser-249, Asn-250, and Ser-293. Isopentenyl diphosphate-binding residues include Ser-248, Ser-249, Asn-250, and Ser-293.

It belongs to the IspH family. Requires [4Fe-4S] cluster as cofactor.

It catalyses the reaction isopentenyl diphosphate + 2 oxidized [2Fe-2S]-[ferredoxin] + H2O = (2E)-4-hydroxy-3-methylbut-2-enyl diphosphate + 2 reduced [2Fe-2S]-[ferredoxin] + 2 H(+). It carries out the reaction dimethylallyl diphosphate + 2 oxidized [2Fe-2S]-[ferredoxin] + H2O = (2E)-4-hydroxy-3-methylbut-2-enyl diphosphate + 2 reduced [2Fe-2S]-[ferredoxin] + 2 H(+). It functions in the pathway isoprenoid biosynthesis; dimethylallyl diphosphate biosynthesis; dimethylallyl diphosphate from (2E)-4-hydroxy-3-methylbutenyl diphosphate: step 1/1. The protein operates within isoprenoid biosynthesis; isopentenyl diphosphate biosynthesis via DXP pathway; isopentenyl diphosphate from 1-deoxy-D-xylulose 5-phosphate: step 6/6. Its function is as follows. Catalyzes the conversion of 1-hydroxy-2-methyl-2-(E)-butenyl 4-diphosphate (HMBPP) into a mixture of isopentenyl diphosphate (IPP) and dimethylallyl diphosphate (DMAPP). Acts in the terminal step of the DOXP/MEP pathway for isoprenoid precursor biosynthesis. This is 4-hydroxy-3-methylbut-2-enyl diphosphate reductase from Mycolicibacterium vanbaalenii (strain DSM 7251 / JCM 13017 / BCRC 16820 / KCTC 9966 / NRRL B-24157 / PYR-1) (Mycobacterium vanbaalenii).